The primary structure comprises 143 residues: Large ribosomal subunit protein uL11 (143 aa).

It belongs to the universal ribosomal protein uL11 family. As to quaternary structure, part of the ribosomal stalk of the 50S ribosomal subunit. Interacts with L10 and the large rRNA to form the base of the stalk. L10 forms an elongated spine to which L12 dimers bind in a sequential fashion forming a multimeric L10(L12)X complex. Post-translationally, one or more lysine residues are methylated.

Its function is as follows. Forms part of the ribosomal stalk which helps the ribosome interact with GTP-bound translation factors. The polypeptide is Large ribosomal subunit protein uL11 (Stutzerimonas stutzeri (strain A1501) (Pseudomonas stutzeri)).